We begin with the raw amino-acid sequence, 442 residues long: tRNA-2-methylthio-N(6)-dimethylallyladenosine synthase (442 aa).

Residues 5–122 (KKVFIKTLGC…LPEMIKQKQK (118 aa)) enclose the MTTase N-terminal domain. [4Fe-4S] cluster is bound by residues cysteine 14, cysteine 51, cysteine 85, cysteine 159, cysteine 163, and cysteine 166. The 234-residue stretch at 145–378 (KAEGAKAYVS…DLLNSNAQII (234 aa)) folds into the Radical SAM core domain. The TRAM domain occupies 380-442 (RQMVGTNQRI…LPNSLRGELI (63 aa)).

The protein belongs to the methylthiotransferase family. MiaB subfamily. Monomer. [4Fe-4S] cluster is required as a cofactor.

The protein resides in the cytoplasm. The catalysed reaction is N(6)-dimethylallyladenosine(37) in tRNA + (sulfur carrier)-SH + AH2 + 2 S-adenosyl-L-methionine = 2-methylsulfanyl-N(6)-dimethylallyladenosine(37) in tRNA + (sulfur carrier)-H + 5'-deoxyadenosine + L-methionine + A + S-adenosyl-L-homocysteine + 2 H(+). Catalyzes the methylthiolation of N6-(dimethylallyl)adenosine (i(6)A), leading to the formation of 2-methylthio-N6-(dimethylallyl)adenosine (ms(2)i(6)A) at position 37 in tRNAs that read codons beginning with uridine. This Francisella tularensis subsp. holarctica (strain FTNF002-00 / FTA) protein is tRNA-2-methylthio-N(6)-dimethylallyladenosine synthase.